Reading from the N-terminus, the 357-residue chain is S-adenosyl-L-methionine:benzoic acid/salicylic acid carboxyl methyltransferase 1 (357 aa).

Position 18 (tyrosine 18) interacts with S-adenosyl-L-homocysteine. Position 25 (glutamine 25) interacts with benzoate. The S-adenosyl-L-homocysteine site is built by cysteine 59, asparagine 64, aspartate 96, leucine 97, serine 135, and phenylalanine 136. Tryptophan 157 is a benzoate binding site. The Mg(2+) site is built by asparagine 168, aspartate 254, phenylalanine 256, and asparagine 257. Position 260 (glutamine 260) interacts with benzoate.

This sequence belongs to the methyltransferase superfamily. Type-7 methyltransferase family. Predominantly expressed in petal limbs and tubes of corollas.

It carries out the reaction benzoate + S-adenosyl-L-methionine = methyl benzoate + S-adenosyl-L-homocysteine. The enzyme catalyses salicylate + S-adenosyl-L-methionine = methyl salicylate + S-adenosyl-L-homocysteine. The protein operates within aromatic compound metabolism. Functionally, converts benzoic acid into the volatile ester methyl benzoates. This scent, mostly produced in a rhythmical, diurnal manner, attracts the pollinators. The polypeptide is S-adenosyl-L-methionine:benzoic acid/salicylic acid carboxyl methyltransferase 1 (Petunia hybrida (Petunia)).